A 356-amino-acid polypeptide reads, in one-letter code: UDP-N-acetylglucosamine--N-acetylmuramyl-(pentapeptide) pyrophosphoryl-undecaprenol N-acetylglucosamine transferase (356 aa).

UDP-N-acetyl-alpha-D-glucosamine contacts are provided by residues 12–14 (TGG), Asn-124, Arg-163, Ser-188, Ile-242, and Gln-287.

It belongs to the glycosyltransferase 28 family. MurG subfamily.

It localises to the cell inner membrane. The catalysed reaction is di-trans,octa-cis-undecaprenyl diphospho-N-acetyl-alpha-D-muramoyl-L-alanyl-D-glutamyl-meso-2,6-diaminopimeloyl-D-alanyl-D-alanine + UDP-N-acetyl-alpha-D-glucosamine = di-trans,octa-cis-undecaprenyl diphospho-[N-acetyl-alpha-D-glucosaminyl-(1-&gt;4)]-N-acetyl-alpha-D-muramoyl-L-alanyl-D-glutamyl-meso-2,6-diaminopimeloyl-D-alanyl-D-alanine + UDP + H(+). It functions in the pathway cell wall biogenesis; peptidoglycan biosynthesis. Cell wall formation. Catalyzes the transfer of a GlcNAc subunit on undecaprenyl-pyrophosphoryl-MurNAc-pentapeptide (lipid intermediate I) to form undecaprenyl-pyrophosphoryl-MurNAc-(pentapeptide)GlcNAc (lipid intermediate II). The polypeptide is UDP-N-acetylglucosamine--N-acetylmuramyl-(pentapeptide) pyrophosphoryl-undecaprenol N-acetylglucosamine transferase (Pseudomonas syringae pv. syringae (strain B728a)).